The sequence spans 308 residues: Polyketide transferase claH (308 aa).

The interval 50–280 (SDIAVYFSQQ…RVEVAAGKSH (231 aa)) is abhydrolase domain.

The protein belongs to the polyketide transferase af380 family.

The protein operates within secondary metabolite biosynthesis. Polyketide transferase; part of the cla gene cluster that produces clavatol and ortho-quinone methide. The clavatol biosynthesis cluster cla and the terrestric acid cluster tra are both involved in the production of peniphenones and penilactones. The non-reducing PKS claF is responsible for the formation of clavatol from successive condensations of 3 malonyl-CoA units, presumably with a simple acetyl-CoA starter unit, and 2 methylation steps. The esterase claE probably collaborates with claF by catalyzing the hydrolysis of ACP-bound acyl intermediates to free the ACP from stalled intermediates. The clavatol oxidase claD then converts clavatol to hydroxyclavatol. Spontaneous dehydration of hydroxyclavatol leads to the accumulation of the highly active ortho-quinone methide. On the other hand, the PKS-NRPS hybrid traA is involved in the formation of crustosic acid, with the help of traB and traD. The polyketide synthase module (PKS) of traA is responsible for the synthesis of the polyketide backbone via the condensation of an acetyl-CoA starter unit with 3 malonyl-CoA units. The downstream nonribosomal peptide synthetase (NRPS) module then amidates the carboxyl end of the polyketide with L-malic acid. Because traA lacks a designated enoylreductase (ER) domain, the required activity is provided the enoyl reductase traG. Crustosic acid undergoes decarboxylation and isomerization to the terrestric acid, catalyzed by the 2-oxoglutarate-dependent dioxygenase traH. Both acids are further converted to the 2 gamma-butyrolactones (R)-5-methyltetronic acid and (S)-5-carboxylmethyltetronic acid, with involvement of the cytochrome P450 monooxygenase claJ. Spontaneous addition of the methide to these gamma-butyrolactones leads to peniphenone D and penilactone D, which undergo again stereospecific attacking by methide to give penilactones A and B. The function of the polyketide transferase claH has not been investigated yet. This chain is Polyketide transferase claH, found in Penicillium crustosum (Blue mold fungus).